Consider the following 196-residue polypeptide: Rac-like GTP-binding protein ARAC5 (196 aa).

16–21 contacts GTP; the sequence is AVGKTC. An Effector region motif is present at residues 35 to 43; that stretch reads YVPTVFDNF. GTP contacts are provided by residues 119–121 and 159–161; these read KLD and SSK. Cys193 is modified (cysteine methyl ester). The S-geranylgeranyl cysteine moiety is linked to residue Cys193. Positions 194–196 are cleaved as a propeptide — removed in mature form; that stretch reads VFL.

Belongs to the small GTPase superfamily. Rho family. Interacts with GDI1 and ROPGEF8 homodimer. Binds to SPK1. Ubiquitous. Preferentially expressed at the tip of root hairs.

The protein localises to the cytoplasm. It is found in the membrane. Its subcellular location is the cell membrane. Its function is as follows. Involved in cell polarity control during the actin-dependent tip growth of root hairs, thus regulating root hair length and root hair initiation. In terms of biological role, inactive GDP-bound Rho GTPases reside in the cytosol, are found in a complex with Rho GDP-dissociation inhibitors (Rho GDIs), and are released from the GDI protein in order to translocate to membranes upon activation. The polypeptide is Rac-like GTP-binding protein ARAC5 (Arabidopsis thaliana (Mouse-ear cress)).